We begin with the raw amino-acid sequence, 65 residues long: uncharacterized protein (65 aa).

The protein to E.coli YjiX.

This is an uncharacterized protein from Escherichia coli O6:H1 (strain CFT073 / ATCC 700928 / UPEC).